Here is a 205-residue protein sequence, read N- to C-terminus: Mitotic spindle assembly checkpoint protein MAD2A (205 aa).

At alanine 2 the chain carries N-acetylalanine. In terms of domain architecture, HORMA spans 14–197 (RGSAEIVAEF…TTIHKVNSMV (184 aa)). Phosphoserine occurs at positions 130, 170, 185, and 195. Residues 195-205 (SMVAYKTPVND) form a required for assuming the closed conformation and for interaction with CDC20 region.

Belongs to the MAD2 family. In terms of assembly, monomer and homodimer. Heterodimerizes with MAD2L1 in order to form a tetrameric MAD1L1-MAD2L1 core complex. In the closed and open conformation, interacts with MAD1L1. Formation of a heterotetrameric core complex containing two molecules each of MAD1L1 and of MAD2L1 promotes binding of another molecule of MAD2L1 to each MAD2L1, resulting in a heterohexamer. Interacts with MAD2L1BP. Interacts with ADAM17/TACE. Interacts with CDC20. Dimeric MAD2L1 in the closed conformation interacts with CDC20. Monomeric MAD2L1 in the open conformation does not interact with CDC20. CDC20 competes with MAD1L1 for MAD2L1 binding. In the closed conformation, interacts with BUB1B. Interacts with TTK. Interacts with TPR. Binds to UBD (via ubiquitin-like 1 domain) during mitosis. Interacts with isoform 1 and isoform 2 of NEK2. Interacts with HSF1; this interaction occurs in mitosis. In terms of processing, phosphorylated on multiple serine residues. The level of phosphorylation varies during the cell cycle and is highest during mitosis. Phosphorylation abolishes interaction with MAD1L1 and reduces interaction with CDC20. Phosphorylated by NEK2.

It localises to the nucleus. Its subcellular location is the chromosome. The protein localises to the centromere. It is found in the kinetochore. The protein resides in the cytoplasm. It localises to the cytoskeleton. Its subcellular location is the spindle pole. Functionally, component of the spindle-assembly checkpoint that prevents the onset of anaphase until all chromosomes are properly aligned at the metaphase plate. In the closed conformation (C-MAD2) forms a heterotetrameric complex with MAD1L1 at unattached kinetochores during prometaphase, and recruits an open conformation of MAD2L1 (O-MAD2) which then promotes the conversion of O-MAD2 to C-MAD2. Required for the execution of the mitotic checkpoint which monitors the process of kinetochore-spindle attachment and inhibits the activity of the anaphase promoting complex by sequestering CDC20 until all chromosomes are aligned at the metaphase plate. In Mus musculus (Mouse), this protein is Mitotic spindle assembly checkpoint protein MAD2A (Mad2l1).